The following is a 1256-amino-acid chain: Protein flightless-1 (1256 aa).

LRR repeat units follow at residues 4–28, 29–51, 52–74, 75–99, 100–122, 124–145, 147–169, 171–192, 218–241, 243–264, 265–287, 289–312, 313–335, 336–358, and 360–381; these read LPFV…MRQM, SRVQ…LGHL, QKLE…LTEL, SCLR…LFHL, EELT…LERA, NLIV…LFIH, TDLL…TRRL, NLKT…QLPS, LANL…VYNV, TLVR…VELW, QRLE…LCKL, KLRR…IGKL, GALE…LCRC, GALK…IHLL, and GLDQ…PSEA. The disordered stretch occupies residues 405-476; that stretch reads AAVPPSMPSS…ESLKPKRWDE (72 aa). The segment covering 431–476 has biased composition (basic and acidic residues); it reads PRSEGDQDAAKVLKGMKDVAKDKDNEAGAVPEDGKPESLKPKRWDE. 4 Gelsolin-like repeats span residues 512-589, 633-703, 749-822, and 1168-1242; these read IEEV…EQFL, EPVA…AEFW, VELP…MQIF, and EKCA…SRRF.

This sequence belongs to the villin/gelsolin family. As to expression, found in ovaries, larval fat bodies, brain and adult thorax.

May play a key role in embryonic cellularization by interacting with both the cytoskeleton and other cellular components. Alternatively, it may play a structural role in indirect flight muscle. Vital for embryonic development. The polypeptide is Protein flightless-1 (fliI) (Drosophila melanogaster (Fruit fly)).